We begin with the raw amino-acid sequence, 776 residues long: Transcription activator of gluconeogenesis HCAG_03671 (776 aa).

The tract at residues 1-70 (MTASTQNGSP…NAKDPLRPRR (70 aa)) is disordered. Polar residues-rich tracts occupy residues 21 to 41 (NQESKNMTANPADASESQSPA) and 50 to 60 (ENGQKHTSTAA). Residues 77 to 105 (CFACQRAHLTCGDERPCQRCIKRGLQDAC) constitute a DNA-binding region (zn(2)-C6 fungal-type). Disordered stretches follow at residues 140 to 159 (RTNASQQQNGPNSNSNKDSR), 179 to 248 (TQAK…PFGA), 286 to 351 (GAGD…NIYN), 556 to 593 (NLNVNTGGSSPRGSGTFTPRNGNGVDPHSGMSASGGGG), and 651 to 726 (REAQ…SPKQ). Over residues 142-155 (NASQQQNGPNSNSN) the composition is skewed to low complexity. The segment covering 195 to 217 (MQDTSINPSAFQAPSPTSTPNFD) has biased composition (polar residues). The span at 218-229 (LSSNPPNRNLSS) shows a compositional bias: low complexity. Composition is skewed to polar residues over residues 230–244 (AMTQTPSSASNQTQD), 292–322 (PSDSATQRGSIGRSSGTFTAQNFGDSTNTQP), 334–351 (WNPSGQSQTNPRNNNIYN), and 557–576 (LNVNTGGSSPRGSGTFTPRN). The span at 657 to 669 (GPDGKGGGGGGGD) shows a compositional bias: gly residues. A compositionally biased stretch (low complexity) spans 670 to 714 (VATTAATTSTSTSNGANSSGHANANRNNTNPNNSSPPSSSSAAAA).

The protein belongs to the ERT1/acuK family.

The protein resides in the nucleus. In terms of biological role, transcription factor which regulates nonfermentable carbon utilization. Activator of gluconeogenetic genes. The polypeptide is Transcription activator of gluconeogenesis HCAG_03671 (Ajellomyces capsulatus (strain NAm1 / WU24) (Darling's disease fungus)).